Here is a 517-residue protein sequence, read N- to C-terminus: FAD-dependent monooxygenase FUP4 (517 aa).

An N-terminal signal peptide occupies residues 1–19 (MRQSSTLTWTSVLLAPLAA). The FAD-binding PCMH-type domain occupies 75–246 (QALRPACLVH…TRFDLDLYDQ (172 aa)). At histidine 112 the chain carries Pros-8alpha-FAD histidine. Residues asparagine 163, asparagine 208, and asparagine 346 are each glycosylated (N-linked (GlcNAc...) asparagine).

The protein belongs to the oxygen-dependent FAD-linked oxidoreductase family. It depends on FAD as a cofactor.

Its pathway is secondary metabolite biosynthesis; terpenoid biosynthesis. In terms of biological role, FAD-dependent monooxygenase; part of the gene cluster that mediates the biosynthesis of the mycotoxin fusaproliferin (FUP) that belongs to the class of bicyclic sesterterpenoids. FUP4 catalyzes the oxidation of the hydroxy group at the C-16 position of preterpestacin III to a keto group, leading to the formation of (-)-terpestacin. The product of FUP1, preterpestacin I, might also serve as a substrate of FUP4 to yield oxo-preterpestacin I. The FUP biosynthetic pathway starts with the enzyme encoded by FUP1 that combines a C-terminal prenyltransferase domain responsible for the synthesis of geranylgeranyl diphosphate with the N-terminal terpene cyclase domain, to yield preterpestacin I. Preterpestacin I is then decorated by oxygenation steps that are catalyzed by two cytochrome P450 monooxygenases. First, FUP2 introduces a hydroxyl group at the C-24 position resulting in the formation of preterpestacin IIa. The second P450 monooxygenase catalyzes the hydroxylation at C-16 and C-17 of preterpestacin IIa, producing preterpestacin III. Subsequently, the FAD-dependent oxidoreductase FUP4 catalyzes the oxidation of the hydroxy group at the C-16 position to a keto group, leading to the formation of (-)-terpestacin, which is the immediate precursor of FUP. The final step in the proposed biosynthetic pathway is the addition of an acetyl group at the C-24 position of terpestacin, which is catalyzed by the acetyltransferase FUP5. The sequence is that of FAD-dependent monooxygenase FUP4 from Fusarium proliferatum (strain ET1) (Orchid endophyte fungus).